Reading from the N-terminus, the 355-residue chain is 3-dehydroquinate synthase (355 aa).

NAD(+) contacts are provided by residues 98–102 (GVVGD), 122–123 (TT), K135, K144, and 162–165 (TLDT). Residues E177, H240, and H257 each contribute to the Zn(2+) site.

It belongs to the sugar phosphate cyclases superfamily. Dehydroquinate synthase family. Co(2+) is required as a cofactor. The cofactor is Zn(2+). Requires NAD(+) as cofactor.

The protein resides in the cytoplasm. The enzyme catalyses 7-phospho-2-dehydro-3-deoxy-D-arabino-heptonate = 3-dehydroquinate + phosphate. Its pathway is metabolic intermediate biosynthesis; chorismate biosynthesis; chorismate from D-erythrose 4-phosphate and phosphoenolpyruvate: step 2/7. Functionally, catalyzes the conversion of 3-deoxy-D-arabino-heptulosonate 7-phosphate (DAHP) to dehydroquinate (DHQ). The protein is 3-dehydroquinate synthase of Dictyoglomus turgidum (strain DSM 6724 / Z-1310).